A 92-amino-acid chain; its full sequence is Co-chaperonin GroES (92 aa).

It belongs to the GroES chaperonin family. Heptamer of 7 subunits arranged in a ring. Interacts with the chaperonin GroEL.

It is found in the cytoplasm. Functionally, together with the chaperonin GroEL, plays an essential role in assisting protein folding. The GroEL-GroES system forms a nano-cage that allows encapsulation of the non-native substrate proteins and provides a physical environment optimized to promote and accelerate protein folding. GroES binds to the apical surface of the GroEL ring, thereby capping the opening of the GroEL channel. This is Co-chaperonin GroES from Methanosarcina mazei (strain ATCC BAA-159 / DSM 3647 / Goe1 / Go1 / JCM 11833 / OCM 88) (Methanosarcina frisia).